Consider the following 279-residue polypeptide: 2-dehydro-3-deoxyphosphooctonate aldolase (279 aa).

This sequence belongs to the KdsA family.

The protein localises to the cytoplasm. It catalyses the reaction D-arabinose 5-phosphate + phosphoenolpyruvate + H2O = 3-deoxy-alpha-D-manno-2-octulosonate-8-phosphate + phosphate. It participates in carbohydrate biosynthesis; 3-deoxy-D-manno-octulosonate biosynthesis; 3-deoxy-D-manno-octulosonate from D-ribulose 5-phosphate: step 2/3. The protein operates within bacterial outer membrane biogenesis; lipopolysaccharide biosynthesis. The sequence is that of 2-dehydro-3-deoxyphosphooctonate aldolase from Aromatoleum aromaticum (strain DSM 19018 / LMG 30748 / EbN1) (Azoarcus sp. (strain EbN1)).